The chain runs to 417 residues: uncharacterized protein (417 aa).

This is an uncharacterized protein from Sulfolobus islandicus rod-shaped virus 1 (SIRV-1).